The primary structure comprises 887 residues: Centrobin (887 aa).

Positions 1–34 (MATAAPSPSSPLRPEDLLSDSSEPPGLNQVSSEV) are disordered. At serine 81 the chain carries Phosphoserine. Disordered regions lie at residues 110-153 (MLHT…PSSS), 465-486 (SLRQAASLRDHHRKQLQELSGQ), 566-591 (TLLPPNPQAPLAEPSSPGPLEPEKGE), and 636-695 (LGPP…LPPA). Basic and acidic residues predominate over residues 113–128 (TSRDTAYRTGSERREE). Residues 133–153 (SDSTATLLNTRPLQDLSPSSS) are compositionally biased toward polar residues. Residues 191 to 557 (RRKHCERHIQ…LQAMLQAHWE (367 aa)) adopt a coiled-coil conformation. A required for centrosome localization region spans residues 360 to 887 (QEHQLKERLQ…SMRSRGGIWR (528 aa)). Positions 670–680 (TDDHRAERPFP) are enriched in basic and acidic residues. Serine 782 carries the post-translational modification Phosphoserine. The disordered stretch occupies residues 824–887 (GTDGQGELVP…SMRSRGGIWR (64 aa)). The segment covering 832 to 849 (VPRRNTDSRLGETTRKEI) has biased composition (basic and acidic residues).

Interacts with LYST.

It localises to the cytoplasm. The protein localises to the cytoskeleton. Its subcellular location is the microtubule organizing center. It is found in the centrosome. The protein resides in the centriole. Its function is as follows. Required for centriole duplication. Inhibition of centriole duplication leading to defects in cytokinesis. This chain is Centrobin (Cntrob), found in Mus musculus (Mouse).